Consider the following 165-residue polypeptide: Transcriptional repressor NrdR (165 aa).

The segment at 3-34 (CPFCRNPDSRVVDSRMADDGSAIRRRRQCPEC) is a zinc-finger region. Residues 46–136 (LTVIKRSGVG…VYQAFESLED (91 aa)) enclose the ATP-cone domain.

Belongs to the NrdR family. The cofactor is Zn(2+).

Functionally, negatively regulates transcription of bacterial ribonucleotide reductase nrd genes and operons by binding to NrdR-boxes. This is Transcriptional repressor NrdR from Arthrobacter sp. (strain FB24).